The following is a 74-amino-acid chain: GHAAANCALARVATALTRRVPASRHGLAEGGTPPWTLLLAVAAVAVLGVVAISLLRRALRIRFRYSKSIQTLRV.

The Virion surface portion of the chain corresponds to 1-34 (GHAAANCALARVATALTRRVPASRHGLAEGGTPP). A helical transmembrane segment spans residues 35–55 (WTLLLAVAAVAVLGVVAISLL). Over 56-73 (RRALRIRFRYSKSIQTLR) the chain is Intravirion.

It belongs to the chordopoxvirinae L1 protein family.

It localises to the virion membrane. The polypeptide is Protein F9 homolog (Capra hircus (Goat)).